Reading from the N-terminus, the 85-residue chain is Probable [Fe-S]-dependent transcriptional repressor (85 aa).

Residues C56, C61, C64, and C71 each contribute to the iron-sulfur cluster site.

This sequence belongs to the FeoC family.

In terms of biological role, may function as a transcriptional regulator that controls feoABC expression. The protein is Probable [Fe-S]-dependent transcriptional repressor of Yersinia pseudotuberculosis serotype O:1b (strain IP 31758).